Here is a 156-residue protein sequence, read N- to C-terminus: Transcription factor E (156 aa).

One can recognise an HTH TFE/IIEalpha-type domain in the interval 1-72; that stretch reads MYGEKAKKVL…LWILNIDQIE (72 aa).

The protein belongs to the TFE family. As to quaternary structure, monomer. Interaction with RNA polymerase subunits RpoF and RpoE is necessary for Tfe stimulatory transcription activity. Able to interact with Tbp and RNA polymerase in the absence of DNA promoter. Interacts both with the preinitiation and elongation complexes.

Its function is as follows. Transcription factor that plays a role in the activation of archaeal genes transcribed by RNA polymerase. Facilitates transcription initiation by enhancing TATA-box recognition by TATA-box-binding protein (Tbp), and transcription factor B (Tfb) and RNA polymerase recruitment. Not absolutely required for transcription in vitro, but particularly important in cases where Tbp or Tfb function is not optimal. It dynamically alters the nucleic acid-binding properties of RNA polymerases by stabilizing the initiation complex and destabilizing elongation complexes. Seems to translocate with the RNA polymerase following initiation and acts by binding to the non template strand of the transcription bubble in elongation complexes. The sequence is that of Transcription factor E from Staphylothermus marinus (strain ATCC 43588 / DSM 3639 / JCM 9404 / F1).